A 90-amino-acid chain; its full sequence is Putative Fis-like DNA-binding protein (90 aa).

The segment at residues 66–85 (QSRAAALLGIHRATLRKKLK) is a DNA-binding region (H-T-H motif).

Belongs to the transcriptional regulatory Fis family.

The protein is Putative Fis-like DNA-binding protein of Xylella fastidiosa (strain 9a5c).